We begin with the raw amino-acid sequence, 131 residues long: Small ribosomal subunit protein uS8 (131 aa).

It belongs to the universal ribosomal protein uS8 family. Part of the 30S ribosomal subunit. Contacts proteins S5 and S12.

Its function is as follows. One of the primary rRNA binding proteins, it binds directly to 16S rRNA central domain where it helps coordinate assembly of the platform of the 30S subunit. The chain is Small ribosomal subunit protein uS8 from Cupriavidus metallidurans (strain ATCC 43123 / DSM 2839 / NBRC 102507 / CH34) (Ralstonia metallidurans).